A 172-amino-acid chain; its full sequence is Endoribonuclease YbeY (172 aa).

Zn(2+)-binding residues include H124, H128, and H134.

The protein belongs to the endoribonuclease YbeY family. The cofactor is Zn(2+).

Its subcellular location is the cytoplasm. Functionally, single strand-specific metallo-endoribonuclease involved in late-stage 70S ribosome quality control and in maturation of the 3' terminus of the 16S rRNA. The sequence is that of Endoribonuclease YbeY from Rhodopseudomonas palustris (strain BisA53).